Here is a 230-residue protein sequence, read N- to C-terminus: 5'-methylthioadenosine/S-adenosylhomocysteine nucleosidase (230 aa).

Glu12 acts as the Proton acceptor in catalysis. Substrate is bound by residues Gly78, Met153, and 174-175 (ME). The Proton donor role is filled by Asp198.

This sequence belongs to the PNP/UDP phosphorylase family. MtnN subfamily.

It catalyses the reaction S-adenosyl-L-homocysteine + H2O = S-(5-deoxy-D-ribos-5-yl)-L-homocysteine + adenine. The enzyme catalyses S-methyl-5'-thioadenosine + H2O = 5-(methylsulfanyl)-D-ribose + adenine. The catalysed reaction is 5'-deoxyadenosine + H2O = 5-deoxy-D-ribose + adenine. Its pathway is amino-acid biosynthesis; L-methionine biosynthesis via salvage pathway; S-methyl-5-thio-alpha-D-ribose 1-phosphate from S-methyl-5'-thioadenosine (hydrolase route): step 1/2. Functionally, catalyzes the irreversible cleavage of the glycosidic bond in both 5'-methylthioadenosine (MTA) and S-adenosylhomocysteine (SAH/AdoHcy) to adenine and the corresponding thioribose, 5'-methylthioribose and S-ribosylhomocysteine, respectively. Also cleaves 5'-deoxyadenosine, a toxic by-product of radical S-adenosylmethionine (SAM) enzymes, into 5-deoxyribose and adenine. This is 5'-methylthioadenosine/S-adenosylhomocysteine nucleosidase from Tolumonas auensis (strain DSM 9187 / NBRC 110442 / TA 4).